We begin with the raw amino-acid sequence, 1486 residues long: Helicase SWR1 (1486 aa).

2 disordered regions span residues 63–89 (DAGA…RGEE) and 113–219 (LDRP…LKRK). The segment covering 148 to 163 (VRKETNDEEHLKEEKS) has biased composition (basic and acidic residues). The span at 164–173 (ASPTVWSPES) shows a compositional bias: polar residues. Residues 174 to 190 (PQRDTYRTIHPSGDHEG) show a composition bias toward basic and acidic residues. A compositionally biased stretch (low complexity) spans 193–204 (SSSSDSFYFTTS). An HSA domain is found at 321–393 (ITTFYQEQEK…EEKRRRALAR (73 aa)). Disordered stretches follow at residues 446-492 (NQND…DSKL), 508-530 (TIDG…EDPQ), 548-590 (FETE…SSQT), and 606-628 (DDAH…EGVQ). Over residues 467–487 (LGDEEMSSSSELDDSEVEAGE) the composition is skewed to acidic residues. Over residues 511–523 (GRSQNSEVSSMTE) the composition is skewed to polar residues. Residues 562-588 (SSSSFSESEISQTSSSENESLINSNSS) show a composition bias toward low complexity. The Helicase ATP-binding domain occupies 683–848 (ASLYNNNTNG…WSLLYFLMPQ (166 aa)). ATP is bound at residue 696-703 (DEMGLGKT). The DEAH box motif lies at 799 to 802 (DEAH). Residues 1221–1371 (SLAVLLRRLK…NIVIQKGEFT (151 aa)) enclose the Helicase C-terminal domain. The segment at 1436–1468 (VDDRDFRESSTCANPSPDEDVDEEPVEDEYEGT) is disordered. Residues 1452–1465 (PDEDVDEEPVEDEY) show a composition bias toward acidic residues.

It belongs to the SNF2/RAD54 helicase family. SWR1 subfamily. As to quaternary structure, component of the SWR1 chromatin-remodeling complex.

Its subcellular location is the nucleus. The catalysed reaction is ATP + H2O = ADP + phosphate + H(+). Catalytic component of the SWR1 complex which mediates the ATP-dependent exchange of histone H2A for the H2A variant HZT1 leading to transcriptional regulation of selected genes by chromatin remodeling. The chain is Helicase SWR1 (SWR1) from Eremothecium gossypii (strain ATCC 10895 / CBS 109.51 / FGSC 9923 / NRRL Y-1056) (Yeast).